We begin with the raw amino-acid sequence, 117 residues long: Ig heavy chain V region J558 (117 aa).

In terms of domain architecture, Ig-like spans E1–S116. An intrachain disulfide couples C22 to C96.

This Mus musculus (Mouse) protein is Ig heavy chain V region J558.